The primary structure comprises 522 residues: DNA-binding protein Ikaros (522 aa).

Disordered regions lie at residues 1-48 (MEME…HNNR) and 96-115 (AKVNGSHAGGPDSKGPYSSA). C2H2-type zinc fingers lie at residues 125-147 (LKCDICGIVCIGPNVLMVHKRSH), 153-175 (FQCTQCGASFTQKGNLLRHIKLH), 181-203 (FKCHLCNYACRRRDALSGHLRTH), and 209-232 (HKCAYCGRSYKQRSSLEEHKERCH). The tract at residues 379 to 406 (KSASSEKDGSPSHSGQDSTDTESNNEEK) is disordered. 2 C2H2-type zinc fingers span residues 468 to 490 (YRCEHCRILFLDHVMYTIHMGCH) and 496 to 520 (FECNLCGHRSQDRYEFSSHMTRGEH).

This sequence belongs to the Ikaros C2H2-type zinc-finger protein family. As to expression, expression mainly limited to thymus, spleen and pronephros. Very low expression in liver. No expression in testis, brain, eye and muscle.

It is found in the nucleus. Functionally, binds and activates the enhancer (delta-A element) of the CD3-delta gene. Functions in the specification and the maturation of the T-lymphocyte. Also interacts with a critical control element in the TDT (terminal deoxynucleotidyltransferase) promoter as well as with the promoters for other genes expressed during early stages of B- and T-cell development. Function is isoform-specific and is modulated by dominant-negative inactive isoforms. This is DNA-binding protein Ikaros (ikzf1) from Oncorhynchus mykiss (Rainbow trout).